The chain runs to 383 residues: Ribosomal RNA large subunit methyltransferase G (383 aa).

The protein belongs to the methyltransferase superfamily. RlmG family.

Its subcellular location is the cytoplasm. It carries out the reaction guanosine(1835) in 23S rRNA + S-adenosyl-L-methionine = N(2)-methylguanosine(1835) in 23S rRNA + S-adenosyl-L-homocysteine + H(+). Specifically methylates the guanine in position 1835 (m2G1835) of 23S rRNA. The polypeptide is Ribosomal RNA large subunit methyltransferase G (Shewanella amazonensis (strain ATCC BAA-1098 / SB2B)).